Reading from the N-terminus, the 154-residue chain is Ubiquitin-like protein 4A-A (154 aa).

Positions 1 to 76 (MILTVKPLQG…LNLVVRPAGE (76 aa)) constitute a Ubiquitin-like domain.

Component of the BAT3 complex.

The protein localises to the cytoplasm. It is found in the cytosol. In terms of biological role, component of the BAT3 complex, a multiprotein complex involved in the post-translational delivery of tail-anchored (TA) membrane proteins to the endoplasmic reticulum membrane. TA membrane proteins, also named type II transmembrane proteins, contain a single C-terminal transmembrane region. In Oncorhynchus mykiss (Rainbow trout), this protein is Ubiquitin-like protein 4A-A (ubl4aa).